Consider the following 729-residue polypeptide: Fatty acid oxidation complex subunit alpha (729 aa).

The enoyl-CoA hydratase/isomerase stretch occupies residues 1-189 (MLYKGDTLYL…KIGLVDGVVK (189 aa)). Aspartate 296 serves as a coordination point for substrate. The interval 311–729 (ETPKQAAVLG…ARPVGSLKTA (419 aa)) is 3-hydroxyacyl-CoA dehydrogenase. Residues methionine 324, aspartate 343, 400–402 (VVE), lysine 407, and serine 429 each bind NAD(+). Catalysis depends on histidine 450, which acts as the For 3-hydroxyacyl-CoA dehydrogenase activity. Asparagine 453 is a binding site for NAD(+). The substrate site is built by asparagine 500 and tyrosine 660. Residues 708–729 (RHNEPYYPPVEPARPVGSLKTA) form a disordered region.

The protein in the N-terminal section; belongs to the enoyl-CoA hydratase/isomerase family. It in the C-terminal section; belongs to the 3-hydroxyacyl-CoA dehydrogenase family. In terms of assembly, heterotetramer of two alpha chains (FadB) and two beta chains (FadA).

The catalysed reaction is a (3S)-3-hydroxyacyl-CoA + NAD(+) = a 3-oxoacyl-CoA + NADH + H(+). The enzyme catalyses a (3S)-3-hydroxyacyl-CoA = a (2E)-enoyl-CoA + H2O. It carries out the reaction a 4-saturated-(3S)-3-hydroxyacyl-CoA = a (3E)-enoyl-CoA + H2O. It catalyses the reaction (3S)-3-hydroxybutanoyl-CoA = (3R)-3-hydroxybutanoyl-CoA. The catalysed reaction is a (3Z)-enoyl-CoA = a 4-saturated (2E)-enoyl-CoA. The enzyme catalyses a (3E)-enoyl-CoA = a 4-saturated (2E)-enoyl-CoA. Its pathway is lipid metabolism; fatty acid beta-oxidation. Involved in the aerobic and anaerobic degradation of long-chain fatty acids via beta-oxidation cycle. Catalyzes the formation of 3-oxoacyl-CoA from enoyl-CoA via L-3-hydroxyacyl-CoA. It can also use D-3-hydroxyacyl-CoA and cis-3-enoyl-CoA as substrate. The polypeptide is Fatty acid oxidation complex subunit alpha (Salmonella gallinarum (strain 287/91 / NCTC 13346)).